Here is a 227-residue protein sequence, read N- to C-terminus: PKHD-type hydroxylase GDI1238/Gdia_1949 (227 aa).

A Fe2OG dioxygenase domain is found at 78–178 (RVVPPLFNRY…RLASFFWTQS (101 aa)). Positions 96, 98, and 159 each coordinate Fe cation. Residue arginine 169 coordinates 2-oxoglutarate.

Fe(2+) is required as a cofactor. It depends on L-ascorbate as a cofactor.

The polypeptide is PKHD-type hydroxylase GDI1238/Gdia_1949 (Gluconacetobacter diazotrophicus (strain ATCC 49037 / DSM 5601 / CCUG 37298 / CIP 103539 / LMG 7603 / PAl5)).